Consider the following 528-residue polypeptide: Phosphoenolpyruvate carboxykinase (ATP) (528 aa).

Arg-56, Tyr-192, and Lys-198 together coordinate substrate. Residues Lys-198, His-217, and 233 to 241 (GLSGTGKTT) contribute to the ATP site. Residues Lys-198 and His-217 each coordinate Mn(2+). Asp-254 serves as a coordination point for Mn(2+). Residues Glu-282, Arg-319, and Thr-444 each coordinate ATP. Arg-319 contacts substrate.

It belongs to the phosphoenolpyruvate carboxykinase (ATP) family. The cofactor is Mn(2+).

It localises to the cytoplasm. It carries out the reaction oxaloacetate + ATP = phosphoenolpyruvate + ADP + CO2. The protein operates within carbohydrate biosynthesis; gluconeogenesis. Its function is as follows. Involved in the gluconeogenesis. Catalyzes the conversion of oxaloacetate (OAA) to phosphoenolpyruvate (PEP) through direct phosphoryl transfer between the nucleoside triphosphate and OAA. The sequence is that of Phosphoenolpyruvate carboxykinase (ATP) from Bacillus cereus (strain ATCC 10987 / NRS 248).